Here is a 410-residue protein sequence, read N- to C-terminus: Acetyltransferase aurG (410 aa).

A run of 3 helical transmembrane segments spans residues 3 to 23, 28 to 48, and 59 to 79; these read LWLV…VVCF, SLVR…GLIL, and WSLV…VGLI. The segment covering 90 to 99 has biased composition (polar residues); the sequence is TSSRGGQPNA. Residues 90–112 are disordered; that stretch reads TSSRGGQPNASLDLAGRKKPPSS. Asn98 carries an N-linked (GlcNAc...) asparagine glycan. Helical transmembrane passes span 157–177, 219–239, 300–320, and 364–384; these read AMTL…GGDL, MYFS…MVGL, ILAT…YSYG, and IGYV…FFPL.

It belongs to the wax synthase family.

It is found in the membrane. Its pathway is polyketide biosynthesis. Functionally, acetyltransferase; part of the gene cluster that mediates the biosynthesis of aurovertins, fungal polyketides that exhibit potent inhibition of adenosine triphosphate synthase. Tha biosynthesis starts with the HR-PKS aurA that selects propionate as the starter unit; synthesizes a hexa-ene chain through the repeated functions of the KR and DH domains in the first six iterations; selectively introduces three alpha-methyl substitutions at C4, C6, and C16 using the S-adensylmethionine-dependent cMET; and shuts off KR and DH in the last three iterations to afford a 1,3,5-triketo portion that can undergo intramolecular cyclization to yield the alpha-pyrone intermediate. AurE may act as a cyclase and enhances the rate of pyrone formation and product release of aurA. The methyltransferase aurB then methylates the C17 hydroxyl group. C17 methylation is required to initiate epoxidation by the downstream monooxygenase aurC. The monooxygenase aurC and the epoxide hydrolase aurD can iteratively transform the terminal triene portion of the methylated precursor into the dioxabicyclo[3.2.1]octane scaffold of aurovertin E. Epoxidation modifications of the precursor occur in two separate steps; bis-epoxidation of the two terminal olefins takes place first, followed by another epoxidation that occurs at C7-C8 after tetrahydrofuran formation. The O-acyltransferase aurG converts aurovertin E to aurovertin A. The protein is Acetyltransferase aurG of Calcarisporium arbuscula (Dendryphion arbuscula).